Here is a 402-residue protein sequence, read N- to C-terminus: Glutamate N-acetyltransferase (402 aa).

Thr-146, Lys-172, Thr-185, Glu-267, Asn-397, and Thr-402 together coordinate substrate. Thr-185 functions as the Nucleophile in the catalytic mechanism.

The protein belongs to the ArgJ family. As to quaternary structure, heterotetramer of two alpha and two beta chains.

It is found in the cytoplasm. It carries out the reaction N(2)-acetyl-L-ornithine + L-glutamate = N-acetyl-L-glutamate + L-ornithine. The protein operates within amino-acid biosynthesis; L-arginine biosynthesis; L-ornithine and N-acetyl-L-glutamate from L-glutamate and N(2)-acetyl-L-ornithine (cyclic): step 1/1. With respect to regulation, competitively inhibited by L-ornithine. Its function is as follows. Catalyzes the transfer of the acetyl group from N(2)-acetylornithine to glutamate, forming N-acetylglutamate and L-ornithine. The polypeptide is Glutamate N-acetyltransferase (Methanocaldococcus jannaschii (strain ATCC 43067 / DSM 2661 / JAL-1 / JCM 10045 / NBRC 100440) (Methanococcus jannaschii)).